Reading from the N-terminus, the 356-residue chain is Protein-arginine kinase (356 aa).

A Phosphagen kinase C-terminal domain is found at F22–A249. ATP contacts are provided by residues I25–S29, V172–F176, and S202–L207.

This sequence belongs to the ATP:guanido phosphotransferase family.

It carries out the reaction L-arginyl-[protein] + ATP = N(omega)-phospho-L-arginyl-[protein] + ADP + H(+). Its function is as follows. Catalyzes the specific phosphorylation of arginine residues in proteins. The chain is Protein-arginine kinase from Chlamydia muridarum (strain MoPn / Nigg).